Reading from the N-terminus, the 359-residue chain is Adenosine 3'-phospho 5'-phosphosulfate transporter 1 (359 aa).

A run of 7 helical transmembrane segments spans residues 26 to 46, 68 to 88, 157 to 177, 184 to 204, 228 to 248, 254 to 276, and 300 to 320; these read NMKL…YGIL, STFL…VIVL, YSIA…GKIS, TSYG…TSTF, SIIS…IEFI, VFFD…YYTI, and TLIY…LVFG. Residues 332–359 form a disordered region; it reads KKHGGHSHGGSNAATTTTPSNNSNNTEK. A compositionally biased stretch (low complexity) spans 340–359; the sequence is GGSNAATTTTPSNNSNNTEK.

The protein belongs to the nucleotide-sugar transporter family. SLC35B subfamily.

It localises to the golgi apparatus membrane. It catalyses the reaction 3'-phosphoadenylyl sulfate(in) + adenosine 3',5'-bisphosphate(out) = 3'-phosphoadenylyl sulfate(out) + adenosine 3',5'-bisphosphate(in). Functionally, probably functions as a 3'-phosphoadenylyl sulfate:adenosine 3',5'-bisphosphate antiporter at the Golgi membranes. Mediates the transport from the cytosol into the lumen of the Golgi of 3'-phosphoadenylyl sulfate/adenosine 3'-phospho 5'-phosphosulfate (PAPS), a universal sulfuryl donor for sulfation events that take place in that compartment. The polypeptide is Adenosine 3'-phospho 5'-phosphosulfate transporter 1 (slc35b2) (Dictyostelium discoideum (Social amoeba)).